A 353-amino-acid chain; its full sequence is MTEPLKPRIDFDGPLEVDQSPKFKAQQTFDENQAQNFAPATLDEAPEEEGQVEAVMDAALRPKRSLWRKMVMGGLALFGASVVGQGVQWTMNAWQTQDWVALGGCAAGALIIGAGVGSVVTEWRRLWRLRQRAHERDEARDLLHSHGAGKGRAFCEKLAQQAGIDQSHPALQRWYASIHETQNDREVVTLYAHLVQPVLDAQARREISRSAAESTLMIAVSPLALVDMAFIAWRNLRLINRIATLYGIELGYYSRLRLFRLVLLNIAFAGASELVREVGMDWMSQDLAARLSTRAAQGIGAGLLTARLGIKAMELCRPLPWLDDDKPRLGDFRRQLIGQLKETLQKAPTRREN.

3 consecutive transmembrane segments (helical) span residues 70–90 (MVMG…VQWT), 100–120 (VALG…GSVV), and 213–233 (ESTL…FIAW).

Belongs to the UPF0283 family.

It is found in the cell inner membrane. The sequence is that of UPF0283 membrane protein YcjF from Escherichia fergusonii (strain ATCC 35469 / DSM 13698 / CCUG 18766 / IAM 14443 / JCM 21226 / LMG 7866 / NBRC 102419 / NCTC 12128 / CDC 0568-73).